A 192-amino-acid chain; its full sequence is EF-hand protein 5 (192 aa).

The disordered stretch occupies residues 1 to 36 (MKDKAPVSSQQDHFSRGGAVGGKPISDVRGTSRPFY). 4 consecutive EF-hand domains span residues 46–80 (AELA…GLHL), 81–118 (SDEE…EVDD), 119–154 (TMLE…GGEC), and 155–190 (STPE…HRLN). Residues Thr-100, Glu-102, Asp-107, Asp-132, and Thr-136 each coordinate Ca(2+).

The protein is EF-hand protein 5 of Trypanosoma brucei brucei.